The following is a 235-amino-acid chain: Small ribosomal subunit protein uS2 (235 aa).

It belongs to the universal ribosomal protein uS2 family.

This is Small ribosomal subunit protein uS2 from Anoxybacillus flavithermus (strain DSM 21510 / WK1).